The primary structure comprises 394 residues: Cell division protein FtsZ (394 aa).

Residues 21 to 25, 108 to 110, Glu-139, Arg-143, and Asp-187 each bind GTP; these read GGGGN and GTG.

This sequence belongs to the FtsZ family. Homodimer. Polymerizes to form a dynamic ring structure in a strictly GTP-dependent manner. Interacts directly with several other division proteins. Interacts with the SulA inhibitor.

The protein resides in the cytoplasm. Its function is as follows. Essential cell division protein that forms a contractile ring structure (Z ring) at the future cell division site. The regulation of the ring assembly controls the timing and the location of cell division. One of the functions of the FtsZ ring is to recruit other cell division proteins to the septum to produce a new cell wall between the dividing cells. Binds GTP and shows GTPase activity. The chain is Cell division protein FtsZ from Pseudomonas aeruginosa (strain ATCC 15692 / DSM 22644 / CIP 104116 / JCM 14847 / LMG 12228 / 1C / PRS 101 / PAO1).